The primary structure comprises 409 residues: Gamma-glutamyl phosphate reductase (409 aa).

The protein belongs to the gamma-glutamyl phosphate reductase family.

Its subcellular location is the cytoplasm. The enzyme catalyses L-glutamate 5-semialdehyde + phosphate + NADP(+) = L-glutamyl 5-phosphate + NADPH + H(+). It participates in amino-acid biosynthesis; L-proline biosynthesis; L-glutamate 5-semialdehyde from L-glutamate: step 2/2. Its function is as follows. Catalyzes the NADPH-dependent reduction of L-glutamate 5-phosphate into L-glutamate 5-semialdehyde and phosphate. The product spontaneously undergoes cyclization to form 1-pyrroline-5-carboxylate. In Mycobacterium leprae (strain TN), this protein is Gamma-glutamyl phosphate reductase.